We begin with the raw amino-acid sequence, 93 residues long: Large ribosomal subunit protein bL27 (93 aa).

Residues 1-22 form a disordered region; that stretch reads MAHKKAGGSSRNGRDSEGRRLG.

Belongs to the bacterial ribosomal protein bL27 family.

This chain is Large ribosomal subunit protein bL27, found in Methylobacterium sp. (strain 4-46).